We begin with the raw amino-acid sequence, 212 residues long: Fucoxanthin-chlorophyll a-c binding protein E, chloroplastic (212 aa).

Residues 1-34 (MAIACAAAPGLRGAEPFNGAALATSAKSSSAMKM) constitute a chloroplast transit peptide. Helical transmembrane passes span 76–96 (IAML…PGML), 117–137 (IPPL…LFVV), and 178–198 (GRAA…SNQP).

The protein belongs to the fucoxanthin chlorophyll protein family. The LHC complex of chromophytic algae is composed of fucoxanthin, chlorophyll A and C bound non-covalently by fucoxanthin chlorophyll proteins (FCPs). The ratio of pigments in this LHC is; fucoxanthin: chlorophyll C: chlorophyll A; (0.6-1): (0.1-0.3): (1).

The protein resides in the plastid. It localises to the chloroplast thylakoid membrane. Functionally, the light-harvesting complex (LHC) functions as a light receptor, it captures and delivers excitation energy to photosystems with which it is closely associated. Energy is transferred from the carotenoid and chlorophyll C (or B) to chlorophyll A and the photosynthetic reaction centers where it is used to synthesize ATP and reducing power. The polypeptide is Fucoxanthin-chlorophyll a-c binding protein E, chloroplastic (FCPE) (Macrocystis pyrifera (Giant kelp)).